The chain runs to 105 residues: Large ribosomal subunit protein uL24 (105 aa).

Belongs to the universal ribosomal protein uL24 family. In terms of assembly, part of the 50S ribosomal subunit.

One of two assembly initiator proteins, it binds directly to the 5'-end of the 23S rRNA, where it nucleates assembly of the 50S subunit. Its function is as follows. One of the proteins that surrounds the polypeptide exit tunnel on the outside of the subunit. The sequence is that of Large ribosomal subunit protein uL24 from Tolumonas auensis (strain DSM 9187 / NBRC 110442 / TA 4).